An 89-amino-acid chain; its full sequence is Small ribosomal subunit protein uS14A (89 aa).

Residues 29–62 form a disordered region; it reads AAGDRTALAKLPRDSNPNRLRLRDQTDGRPRGYM. Residues 49–58 are compositionally biased toward basic and acidic residues; the sequence is RLRDQTDGRP.

The protein belongs to the universal ribosomal protein uS14 family. In terms of assembly, part of the 30S ribosomal subunit. Contacts proteins S3 and S10.

Its function is as follows. Binds 16S rRNA, required for the assembly of 30S particles and may also be responsible for determining the conformation of the 16S rRNA at the A site. The sequence is that of Small ribosomal subunit protein uS14A from Enterococcus faecalis (strain ATCC 700802 / V583).